The primary structure comprises 217 residues: Thymidylate kinase (217 aa).

12-19 (GIDGSGKS) lines the ATP pocket.

This sequence belongs to the thymidylate kinase family.

It catalyses the reaction dTMP + ATP = dTDP + ADP. Functionally, phosphorylation of dTMP to form dTDP in both de novo and salvage pathways of dTTP synthesis. This Cereibacter sphaeroides (strain ATCC 17023 / DSM 158 / JCM 6121 / CCUG 31486 / LMG 2827 / NBRC 12203 / NCIMB 8253 / ATH 2.4.1.) (Rhodobacter sphaeroides) protein is Thymidylate kinase.